Reading from the N-terminus, the 432-residue chain is Septin-14 (432 aa).

In terms of domain architecture, Septin-type G spans 49-315 (QGFTFNILCV…ECYRYQKLQK (267 aa)). The segment at 59–66 (GETGIGKS) is G1 motif. GTP-binding positions include 59 to 66 (GETGIGKS), Gly-114, 195 to 203 (KADTISKND), Gly-249, and Arg-264. Positions 111-114 (ETVG) are G3 motif. A G4 motif region spans residues 194 to 197 (AKAD). A coiled-coil region spans residues 332–412 (EIFEAKRQEF…IIDFYKMKAA (81 aa)). Residues 369-432 (EAEKELQDKF…DTKKDKHRKK (64 aa)) are required for interaction with SEPTIN4. Required for migration of cortical neurons during corticogenesis.

It belongs to the TRAFAC class TrmE-Era-EngA-EngB-Septin-like GTPase superfamily. Septin GTPase family. As to quaternary structure, septins polymerize into heterooligomeric protein complexes that form filaments, and can associate with cellular membranes, actin filaments and microtubules. GTPase activity is required for filament formation. Interacts with ACTN4. Interacts with SEPTIN9. Interacts (via C-terminus) with SEPTIN4. In terms of tissue distribution, testis-specific (at protein level).

The protein resides in the cytoplasm. Its subcellular location is the cytoskeleton. It is found in the cell projection. The protein localises to the axon. It localises to the dendrite. The protein resides in the perikaryon. Its subcellular location is the perinuclear region. It is found in the cytoplasmic vesicle. The protein localises to the secretory vesicle. It localises to the acrosome. Its function is as follows. Filament-forming cytoskeletal GTPase. Involved in the migration of cortical neurons and the formation of neuron leading processes during embryonic development. Plays a role in sperm head formation during spermiogenesis, potentially via facilitating localization of ACTN4 to cell filaments. In Homo sapiens (Human), this protein is Septin-14.